Consider the following 333-residue polypeptide: Ketol-acid reductoisomerase (NADP(+)) (333 aa).

Positions 1–181 (MKVYYDQDAD…GGARSGVIET (181 aa)) constitute a KARI N-terminal Rossmann domain. NADP(+) contacts are provided by residues 24–27 (YGSQ), Arg-47, and 82–85 (DEVQ). Residue His-107 is part of the active site. Residue Gly-133 coordinates NADP(+). The KARI C-terminal knotted domain maps to 182 to 327 (TFREETETDL…KELRSMMPWL (146 aa)). 4 residues coordinate Mg(2+): Asp-190, Glu-194, Glu-226, and Glu-230. Position 251 (Ser-251) interacts with substrate.

This sequence belongs to the ketol-acid reductoisomerase family. It depends on Mg(2+) as a cofactor.

It carries out the reaction (2R)-2,3-dihydroxy-3-methylbutanoate + NADP(+) = (2S)-2-acetolactate + NADPH + H(+). The catalysed reaction is (2R,3R)-2,3-dihydroxy-3-methylpentanoate + NADP(+) = (S)-2-ethyl-2-hydroxy-3-oxobutanoate + NADPH + H(+). It participates in amino-acid biosynthesis; L-isoleucine biosynthesis; L-isoleucine from 2-oxobutanoate: step 2/4. Its pathway is amino-acid biosynthesis; L-valine biosynthesis; L-valine from pyruvate: step 2/4. Its function is as follows. Involved in the biosynthesis of branched-chain amino acids (BCAA). Catalyzes an alkyl-migration followed by a ketol-acid reduction of (S)-2-acetolactate (S2AL) to yield (R)-2,3-dihydroxy-isovalerate. In the isomerase reaction, S2AL is rearranged via a Mg-dependent methyl migration to produce 3-hydroxy-3-methyl-2-ketobutyrate (HMKB). In the reductase reaction, this 2-ketoacid undergoes a metal-dependent reduction by NADPH to yield (R)-2,3-dihydroxy-isovalerate. This Desulfovibrio desulfuricans (strain ATCC 27774 / DSM 6949 / MB) protein is Ketol-acid reductoisomerase (NADP(+)).